Here is an 839-residue protein sequence, read N- to C-terminus: Toll-like receptor 4 (839 aa).

An N-terminal signal peptide occupies residues 1–23 (MMSASRLAGTLIPAMAFLSCVRP). Over 24 to 631 (ESWEPCVEVV…SLNITCQMNK (608 aa)) the chain is Extracellular. Cys29 and Cys40 form a disulfide bridge. The N-linked (GlcNAc...) asparagine glycan is linked to Asn35. 5 LRR repeats span residues 55 to 76 (STKN…SFFS), 79 to 100 (ELQV…AYQS), 103 to 124 (HLST…AFSG), 127 to 148 (SLQK…PIGH), and 151 to 172 (TLKE…EYFS). N-linked (GlcNAc...) asparagine glycosylation is present at Asn173. LRR repeat units lie at residues 176–199 (NLEH…RVLH), 205–225 (NLSL…AFKE), and 227–247 (RLHK…KTCI). Asn205 is a glycosylation site (N-linked (GlcNAc...) asparagine). The cysteines at positions 281 and 306 are disulfide-linked. N-linked (GlcNAc...) asparagine glycans are attached at residues Asn282 and Asn309. LRR repeat units follow at residues 331–351 (GWQH…LKLK), 352–373 (SLKR…VDLP), 374–394 (SLEF…CSQS), 400–422 (SLKY…LGLE), 423–444 (QLEH…SVFL), 448–456 (NLIYLDISH), 472–495 (SLEV…FTEL), 497–518 (NLTF…AFNS), 521–542 (SLQV…PYKC), and 545–565 (SLQV…QELQ). Cys390 and Cys391 are joined by a disulfide. N-linked (GlcNAc...) asparagine glycans are attached at residues Asn497 and Asn526. N-linked (GlcNAc...) asparagine glycosylation occurs at Asn575. In terms of domain architecture, LRRCT spans 579–629 (NDFACTCEHQSFLQWIKDQRQLLVEVERMECATPSDKQGMPVLSLNITCQM). 2 disulfide bridges follow: Cys583/Cys609 and Cys585/Cys627. Asn624 and Asn630 each carry an N-linked (GlcNAc...) asparagine glycan. The helical transmembrane segment at 632 to 652 (TIIGVSVLSVLVVSVVAVLVY) threads the bilayer. At 653-839 (KFYFHLMLLA…GCNWQEATSI (187 aa)) the chain is on the cytoplasmic side. Residues 672-815 (NIYDAFVIYS…IFWRRLRKAL (144 aa)) form the TIR domain.

This sequence belongs to the Toll-like receptor family. Belongs to the lipopolysaccharide (LPS) receptor, a multi-protein complex containing at least CD14, LY96 and TLR4. Binding to bacterial LPS leads to homodimerization. Interacts with LY96 via the extracellular domain. Interacts with MYD88 and TIRAP via their respective TIR domains. Interacts with NOX4. Interacts with CNPY3 and HSP90B1; this interaction is required for proper folding in the endoplasmic reticulum. Interacts with MAP3K21; this interaction leads to negative regulation of TLR4 signaling. Interacts with CD36, following CD36 stimulation by oxLDL or amyloid-beta 42, and forms a heterodimer with TLR6. The trimeric complex is internalized and triggers inflammatory response. LYN kinase activity facilitates TLR4-TLR6 heterodimerization and signal initiation. Interacts with TICAM1 in response to LPS in a WDFY1-dependent manner. Interacts with WDFY1 in response to LPS. Interacts with SMPDL3B. Interacts with CEACAM1; upon lipopolysaccharide stimulation, forms a complex including TLR4 and the phosphorylated form of SYK and CEACAM1, which in turn, recruits PTPN6 that dephosphorylates SYK, reducing the production of reactive oxygen species (ROS) and lysosome disruption, which in turn, reduces the activity of the inflammasome. Interacts with RFTN1; the interaction occurs in response to lipopolysaccharide stimulation. Interacts with SCIMP; the interaction occurs in response to lipopolysaccharide stimulation and is enhanced by phosphorylation of SCIMP by LYN. This interaction facilitates the phosphorylation of TLR4 by LYN which elicits a selective cytokine response in macrophages. Interacts with TRAF3IP3. Interacts with TREM1; this interaction enhances TLR4-mediated inflammatory response. Interacts with ZG16B/PAUF. Interacts with CD82; this interaction inhibits TLR4-mediated signaling pathway. Phosphorylated on tyrosine residues by LYN after binding lipopolysaccharide. In terms of processing, ubiquitinated by RNF128 via 'Lys-28'-linked polyubiquitin chains, leading to proteasomal degradation.

The protein localises to the cell membrane. It is found in the early endosome. It localises to the cell projection. Its subcellular location is the ruffle. Its function is as follows. Transmembrane receptor that functions as a pattern recognition receptor recognizing pathogen- and damage-associated molecular patterns (PAMPs and DAMPs) to induce innate immune responses via downstream signaling pathways. At the plasma membrane, cooperates with LY96 to mediate the innate immune response to bacterial lipopolysaccharide (LPS). Also involved in LPS-independent inflammatory responses triggered by free fatty acids, such as palmitate, and Ni(2+). Mechanistically, acts via MYD88, TIRAP and TRAF6, leading to NF-kappa-B activation, cytokine secretion and the inflammatory response. Alternatively, CD14-mediated TLR4 internalization via endocytosis is associated with the initiation of a MYD88-independent signaling via the TICAM1-TBK1-IRF3 axis leading to type I interferon production. In addition to the secretion of proinflammatory cytokines, initiates the activation of NLRP3 inflammasome and formation of a positive feedback loop between autophagy and NF-kappa-B signaling cascade. In complex with TLR6, promotes inflammation in monocytes/macrophages by associating with TLR6 and the receptor CD86. Upon ligand binding, such as oxLDL or amyloid-beta 42, the TLR4:TLR6 complex is internalized and triggers inflammatory response, leading to NF-kappa-B-dependent production of CXCL1, CXCL2 and CCL9 cytokines, via MYD88 signaling pathway, and CCL5 cytokine, via TICAM1 signaling pathway. In myeloid dendritic cells, vesicular stomatitis virus glycoprotein G but not LPS promotes the activation of IRF7, leading to type I IFN production in a CD14-dependent manner. The polypeptide is Toll-like receptor 4 (TLR4) (Pan paniscus (Pygmy chimpanzee)).